Here is a 143-residue protein sequence, read N- to C-terminus: Snake venom vascular endothelial growth factor toxin (143 aa).

The N-terminal stretch at 1–24 is a signal peptide; the sequence is MAAYLLAVAILFCIQGWPSATVQG. Glutamine 25 carries the pyrrolidone carboxylic acid modification. Disulfide bonds link cysteine 38/cysteine 80, cysteine 69/cysteine 115, and cysteine 73/cysteine 117. The interval 115–143 is disordered; it reads CECRPRSPGDVNNGRNPEEGEPRARFPFV. The span at 130 to 143 shows a compositional bias: basic and acidic residues; that stretch reads NPEEGEPRARFPFV.

It belongs to the PDGF/VEGF growth factor family. Snake venom VEGF subfamily. Homodimer; disulfide-linked. Interacts with VEGF receptor-2 (KDR). In terms of processing, the N-terminus is blocked for N-terminal sequencing, suggesting a Pyrrolidone carboxylic acid at Gln-25. In terms of tissue distribution, expressed by the venom gland.

The protein localises to the secreted. Functionally, snake venom VEGFs that may contribute to venom dispersion and prey subjugation by inducing vascular permeability and hypotension. This protein induces an increase in capillary permeability when intradermally injected into mice. Also provokes a drastic hypotensive effect after intravenous injection. The hypotension is mediated by nitric oxide (NO), which is produced by VEGF-activated endothelium NO synthase. Also induces angiogenesis in vitro. Unlike other crotalid VEGFs, this protein interacts with VEGF receptor-2 (KDR) with a high affinity (Kd=413 pM), whereas no interaction is detected with VEGF receptor-1 (FLT1). The protein is Snake venom vascular endothelial growth factor toxin of Protobothrops jerdonii (Jerdon's pitviper).